The chain runs to 926 residues: Transcriptional activator protein acu-15 (926 aa).

Positions 24–51 (CDRCRSKKIRCDGIRPCCSQCANVGFEC) form a DNA-binding region, zn(2)-C6 fungal-type. 3 disordered regions span residues 100–129 (KMHS…TPAK), 602–649 (LPQS…SASL), and 667–801 (TPQH…TSTG). Over residues 119–129 (EIKRDSGTPAK) the composition is skewed to basic and acidic residues. Low complexity-rich tracts occupy residues 623–632 (AQQGSPSPSA) and 669–681 (QHQQ…LQQQ). Composition is skewed to polar residues over residues 689-703 (ARSQ…QKAQ) and 726-736 (RTSTGTQSTPN). Residues 740-792 (LSLSSPQSPVSPVQMRSQPHQLQQQQQQQPQPQQQQQQHQRSSIASSHSQQGQ) are compositionally biased toward low complexity.

The protein resides in the nucleus. Positive regulator of acetate induction. This Neurospora crassa (strain ATCC 24698 / 74-OR23-1A / CBS 708.71 / DSM 1257 / FGSC 987) protein is Transcriptional activator protein acu-15 (acu-15).